The following is a 101-amino-acid chain: Integration host factor subunit beta (101 aa).

This sequence belongs to the bacterial histone-like protein family. As to quaternary structure, heterodimer of an alpha and a beta chain.

Its function is as follows. This protein is one of the two subunits of integration host factor, a specific DNA-binding protein that functions in genetic recombination as well as in transcriptional and translational control. This is Integration host factor subunit beta from Maricaulis maris (strain MCS10) (Caulobacter maris).